The following is a 583-amino-acid chain: Aspartate--tRNA ligase (583 aa).

L-aspartate is bound at residue E174. The tract at residues 198–201 (QITK) is aspartate. R220 contacts L-aspartate. ATP contacts are provided by residues 220–222 (RDE) and Q229. H443 provides a ligand contact to L-aspartate. E477 contributes to the ATP binding site. R484 provides a ligand contact to L-aspartate. 529–532 (GLDR) provides a ligand contact to ATP.

The protein belongs to the class-II aminoacyl-tRNA synthetase family. Type 1 subfamily. As to quaternary structure, homodimer.

The protein resides in the cytoplasm. It catalyses the reaction tRNA(Asp) + L-aspartate + ATP = L-aspartyl-tRNA(Asp) + AMP + diphosphate. In terms of biological role, catalyzes the attachment of L-aspartate to tRNA(Asp) in a two-step reaction: L-aspartate is first activated by ATP to form Asp-AMP and then transferred to the acceptor end of tRNA(Asp). In Streptococcus suis (strain 98HAH33), this protein is Aspartate--tRNA ligase.